Here is a 122-residue protein sequence, read N- to C-terminus: MAENVVNDILKWLETQLQRNEGIKIDTIANKSGYSKWHLQRIFKDFKGCTLGEYVRKRRLLEAAKSLQEKDMSILDIALMYGFSSQATFTRIFKKHFNTTPAKFRENGTMPDTHCFMSCETH.

The HTH araC/xylS-type domain maps to 7-107 (NDILKWLETQ…NTTPAKFREN (101 aa)). 2 DNA-binding regions (H-T-H motif) span residues 26–47 (DTIA…KDFK) and 74–97 (ILDI…KKHF).

Upon expression in E.coli strain KY2563 confers resistance to antibiotics ofloxacin, ciprofloxacin, tetracycline, chloramphenicol, and ceftazidime (increases minimal inhibitory concentration by 8-32 times); also decreases expression of OmpF. The sequence is that of Probable transcription factor PqrA from Proteus vulgaris.